Reading from the N-terminus, the 252-residue chain is MKILLTNDDGVQGLGMLKLAEYLKDKYKVTVVAPEKERSAISHAITLHKPLRLKKVKEEDSLKIYAINGTPSDCVKLGIEVVLREKPDIVISGINEGLNLGTDILYSGTVSAAIEAAIYGIPAIAVSRAETADIEDRRIYKFLENLIEKVLEKGLPKNTLLNVNIPDFKKGIKGVKATILGKSIYIETFQKNYDPRGKEYYWMAGKISEIEKDERTDIVSVKEGYISITPIHFDLTEYNMINILNSWDIKIE.

Residues Asp-8, Asp-9, Ser-39, and Asn-95 each coordinate a divalent metal cation.

It belongs to the SurE nucleotidase family. A divalent metal cation serves as cofactor.

The protein resides in the cytoplasm. The catalysed reaction is a ribonucleoside 5'-phosphate + H2O = a ribonucleoside + phosphate. Functionally, nucleotidase that shows phosphatase activity on nucleoside 5'-monophosphates. The chain is 5'-nucleotidase SurE from Thermoanaerobacter sp. (strain X514).